We begin with the raw amino-acid sequence, 415 residues long: Krueppel-like factor 15 (415 aa).

The 9aaTAD motif lies at 75 to 83 (SILDFLLSR). The interval 172-216 (LSAGSHRSHLHPESAGRERCTPPPGGTSGGGAQSAGEGPAHDGPV) is disordered. The span at 181-191 (LHPESAGRERC) shows a compositional bias: basic and acidic residues. C2H2-type zinc fingers lie at residues 320 to 344 (HKCTFPGCSKMYTKSSHLKAHLRRH), 350 to 374 (FACTWPGCGWRFSRSDELSRHRRSH), and 380 to 402 (YQCPVCEKKFARSDHLSKHIKVH).

This sequence belongs to the Sp1 C2H2-type zinc-finger protein family. In terms of assembly, interacts with MYOCD. Interacts with EP300. In terms of tissue distribution, expressed in aortic smooth muscle cells.

It is found in the nucleus. Functionally, transcriptional regulator that binds to the GA element of the CLCNKA promoter. Binds to the KCNIP2 promoter and regulates KCNIP2 circadian expression in the heart. Is a repressor of CCN2 expression, involved in the control of cardiac fibrosis. Is also involved in the control of cardiac hypertrophy acting through the inhibition of MEF2A, GATA4 and MYOCD activity. Is a negative regulator of TP53 acetylation. Inhibits NF-kappa-B activation through repression of EP300-dependent RELA acetylation. Involved in podocyte differentiation. This is Krueppel-like factor 15 (Klf15) from Mus musculus (Mouse).